We begin with the raw amino-acid sequence, 162 residues long: NADH-quinone oxidoreductase subunit I (162 aa).

2 4Fe-4S ferredoxin-type domains span residues 54 to 83 (RRYE…IESE) and 93 to 122 (TRYD…ETQI). 8 residues coordinate [4Fe-4S] cluster: Cys-63, Cys-66, Cys-69, Cys-73, Cys-102, Cys-105, Cys-108, and Cys-112.

It belongs to the complex I 23 kDa subunit family. NDH-1 is composed of 14 different subunits. Subunits NuoA, H, J, K, L, M, N constitute the membrane sector of the complex. [4Fe-4S] cluster serves as cofactor.

Its subcellular location is the cell inner membrane. The enzyme catalyses a quinone + NADH + 5 H(+)(in) = a quinol + NAD(+) + 4 H(+)(out). In terms of biological role, NDH-1 shuttles electrons from NADH, via FMN and iron-sulfur (Fe-S) centers, to quinones in the respiratory chain. The immediate electron acceptor for the enzyme in this species is believed to be ubiquinone. Couples the redox reaction to proton translocation (for every two electrons transferred, four hydrogen ions are translocated across the cytoplasmic membrane), and thus conserves the redox energy in a proton gradient. This is NADH-quinone oxidoreductase subunit I from Burkholderia pseudomallei (strain 668).